The sequence spans 95 residues: MSVDATTVRRIAHLARIAVTDDEVPHLQGELNAMLAFVEQLSEVDVEGVEPMTSVTPMQMKKRADLVDDGEITDKVVANAPASEDHFFLVPKVVE.

Belongs to the GatC family. Heterotrimer of A, B and C subunits.

The enzyme catalyses L-glutamyl-tRNA(Gln) + L-glutamine + ATP + H2O = L-glutaminyl-tRNA(Gln) + L-glutamate + ADP + phosphate + H(+). It carries out the reaction L-aspartyl-tRNA(Asn) + L-glutamine + ATP + H2O = L-asparaginyl-tRNA(Asn) + L-glutamate + ADP + phosphate + 2 H(+). Allows the formation of correctly charged Asn-tRNA(Asn) or Gln-tRNA(Gln) through the transamidation of misacylated Asp-tRNA(Asn) or Glu-tRNA(Gln) in organisms which lack either or both of asparaginyl-tRNA or glutaminyl-tRNA synthetases. The reaction takes place in the presence of glutamine and ATP through an activated phospho-Asp-tRNA(Asn) or phospho-Glu-tRNA(Gln). This is Aspartyl/glutamyl-tRNA(Asn/Gln) amidotransferase subunit C from Rhodopseudomonas palustris (strain BisA53).